The following is a 373-amino-acid chain: Innexin shaking-B (373 aa).

Over 1-21 the chain is Cytoplasmic; the sequence is MLDIFRGLKSLVKISHVNTDS. The chain crosses the membrane as a helical span at residues 22 to 42; sequence PVFRLHYSITVIILMSFSLIV. The Extracellular segment spans residues 43–106; sequence TTRQYVGNPI…SAEATAADKK (64 aa). A helical transmembrane segment spans residues 107 to 127; sequence IYKYYQWVCFCLFFQAILFYT. The Cytoplasmic segment spans residues 128 to 176; that stretch reads PRWLWKSWEGGKIHALMMDLDIGICSEIEKKQKKKLLLDYLWDNLRYHN. A helical transmembrane segment spans residues 177-199; sequence WWAYRYYVCEFLSLCNVIGQMFL. The Extracellular portion of the chain corresponds to 200-268; the sequence is MNRFFDGEFM…ILPLNVVNEK (69 aa). Residues 269–289 form a helical membrane-spanning segment; it reads IYIFLWFWFIILTILTTLTIF. Topologically, residues 290-373 are cytoplasmic; it reads YRIIIIFSPR…PGMKGEIQDA (84 aa).

The protein belongs to the pannexin family. Monomer.

It is found in the cell membrane. It localises to the cell junction. Its subcellular location is the gap junction. Its function is as follows. Structural component of the gap junctions at electrical synapses in distal and mid-depth levels in the lamina. This is Innexin shaking-B from Anopheles gambiae (African malaria mosquito).